The sequence spans 449 residues: Cryptochrome DASH (449 aa).

Positions 15–147 (RLGLFVFRND…PFHETPNNTL (133 aa)) constitute a Photolyase/cryptochrome alpha/beta domain.

Belongs to the DNA photolyase class-1 family. It depends on FAD as a cofactor. Requires (6R)-5,10-methylene-5,6,7,8-tetrahydrofolate as cofactor.

May have a photoreceptor function. Binds DNA; probably functions as a transcriptional repressor. The sequence is that of Cryptochrome DASH (cry) from Idiomarina loihiensis (strain ATCC BAA-735 / DSM 15497 / L2-TR).